We begin with the raw amino-acid sequence, 349 residues long: E3 ubiquitin-protein ligase SINA-like 10 (349 aa).

Residues 1-77 are disordered; that stretch reads MARFSVCGGD…STSDDSDREV (77 aa). An RING-type; degenerate zinc finger spans residues 113–149; the sequence is CPICCEPLKIPIFQCDNGHLACTLCCTKVRNRCPSCT. The tract at residues 163-344 is SBD; the sequence is VIEASRVSCL…NLQIWIGHGR (182 aa). Residues 166–224 form an SIAH-type zinc finger; the sequence is ASRVSCLNAKYGCKESTSYGNRFSHEQVCVFTPCSCPILDCHYTGYYKDLNNHVRAEHK. Zn(2+) is bound by residues Cys171, Cys178, His190, Cys194, Cys201, Cys206, His218, and His223.

Belongs to the SINA (Seven in absentia) family.

It catalyses the reaction S-ubiquitinyl-[E2 ubiquitin-conjugating enzyme]-L-cysteine + [acceptor protein]-L-lysine = [E2 ubiquitin-conjugating enzyme]-L-cysteine + N(6)-ubiquitinyl-[acceptor protein]-L-lysine.. The protein operates within protein modification; protein ubiquitination. E3 ubiquitin-protein ligase that mediates ubiquitination and subsequent proteasomal degradation of target proteins. E3 ubiquitin ligases accept ubiquitin from an E2 ubiquitin-conjugating enzyme in the form of a thioester and then directly transfers the ubiquitin to targeted substrates. It probably triggers the ubiquitin-mediated degradation of different substrates. The chain is E3 ubiquitin-protein ligase SINA-like 10 from Arabidopsis thaliana (Mouse-ear cress).